Here is a 252-residue protein sequence, read N- to C-terminus: Phosphoribosylformylglycinamidine synthase subunit PurQ (252 aa).

Residues 6–237 form the Glutamine amidotransferase type-1 domain; the sequence is VGVVVFPGSN…FAHLAGTKRS (232 aa). Residue C89 is the Nucleophile of the active site. Catalysis depends on residues H206 and E208.

As to quaternary structure, part of the FGAM synthase complex composed of 1 PurL, 1 PurQ and 2 PurS subunits.

It localises to the cytoplasm. The catalysed reaction is N(2)-formyl-N(1)-(5-phospho-beta-D-ribosyl)glycinamide + L-glutamine + ATP + H2O = 2-formamido-N(1)-(5-O-phospho-beta-D-ribosyl)acetamidine + L-glutamate + ADP + phosphate + H(+). The enzyme catalyses L-glutamine + H2O = L-glutamate + NH4(+). The protein operates within purine metabolism; IMP biosynthesis via de novo pathway; 5-amino-1-(5-phospho-D-ribosyl)imidazole from N(2)-formyl-N(1)-(5-phospho-D-ribosyl)glycinamide: step 1/2. Its function is as follows. Part of the phosphoribosylformylglycinamidine synthase complex involved in the purines biosynthetic pathway. Catalyzes the ATP-dependent conversion of formylglycinamide ribonucleotide (FGAR) and glutamine to yield formylglycinamidine ribonucleotide (FGAM) and glutamate. The FGAM synthase complex is composed of three subunits. PurQ produces an ammonia molecule by converting glutamine to glutamate. PurL transfers the ammonia molecule to FGAR to form FGAM in an ATP-dependent manner. PurS interacts with PurQ and PurL and is thought to assist in the transfer of the ammonia molecule from PurQ to PurL. In Chlorobaculum parvum (strain DSM 263 / NCIMB 8327) (Chlorobium vibrioforme subsp. thiosulfatophilum), this protein is Phosphoribosylformylglycinamidine synthase subunit PurQ.